The following is a 246-amino-acid chain: Putative KilA-N domain-containing protein L33 (246 aa).

In terms of domain architecture, KilA-N spans 20–129 (RYTKCQYCDI…AKVSLWIEEW (110 aa)).

This is Putative KilA-N domain-containing protein L33 from Acanthamoeba polyphaga mimivirus (APMV).